Reading from the N-terminus, the 540-residue chain is Chaperonin GroEL (540 aa).

ATP contacts are provided by residues Thr29–Pro32, Asp86–Thr90, Gly413, Asn476–Ala478, and Asp492.

The protein belongs to the chaperonin (HSP60) family. In terms of assembly, forms a cylinder of 14 subunits composed of two heptameric rings stacked back-to-back. Interacts with the co-chaperonin GroES.

The protein resides in the cytoplasm. The enzyme catalyses ATP + H2O + a folded polypeptide = ADP + phosphate + an unfolded polypeptide.. Together with its co-chaperonin GroES, plays an essential role in assisting protein folding. The GroEL-GroES system forms a nano-cage that allows encapsulation of the non-native substrate proteins and provides a physical environment optimized to promote and accelerate protein folding. This is Chaperonin GroEL from Geobacillus thermodenitrificans (strain NG80-2).